The chain runs to 630 residues: Tyrosinase (630 aa).

Cu cation contacts are provided by histidine 69, histidine 92, histidine 101, histidine 317, histidine 321, and histidine 360. A cross-link (2'-(S-cysteinyl)-histidine (Cys-His)) is located at residues 90 to 92 (CVH).

It belongs to the tyrosinase family. It depends on Cu(2+) as a cofactor.

The catalysed reaction is 2 L-dopa + O2 = 2 L-dopaquinone + 2 H2O. It carries out the reaction L-tyrosine + O2 = L-dopaquinone + H2O. In terms of biological role, this is a copper-containing oxidase that functions in the formation of pigments such as melanins and other polyphenolic compounds. This Aspergillus fumigatus (strain ATCC MYA-4609 / CBS 101355 / FGSC A1100 / Af293) (Neosartorya fumigata) protein is Tyrosinase (tyr1).